The following is a 924-amino-acid chain: MQTKGCRFFMNTEQLQKTLRSSQYAEQVLGLHQLYLEQDYQIDQFAAPLSRENIFQSVENELKDIQDESQWMRVVRILRARLMFRWIWQDANRLTNVVSLTRELSDFADACICAAKQFARAPLVAKHGEPVGYDGQIQDLIVIGMGKLGAQELNLSSDIDLIFAYDEQGETNGRKSIDVQQFCILWGQKLIYLLDHITADGFVFRVDMRLRPWGDGSALAISHMALEKYLIQHGREWERYAWIKARIISGGKHGDDLLEMTRPFVFRRYVDYSAFAAMREMKSMIEREVARRNIADDIKLGAGGIREVEFIVQVFQLIYGGSKRELQDRQCLVSLNHLGQAGLLQSQDVIELEDAYLFLRRVEHAIQALNDQQTQMLPMEPELRQRILDTLEYPTWDNFIEALNEKRHKVSEQFKKLIQEEVTSPDETDTELEQQLNAILDETAQNLVHEFWQSNALKRLPSKAVQRLKDFWPHFIEAILQSEHPQMAFMRLMPLIESVMRRTVYLVMLMESRGAMQRLVKMATVSPWICEELTQYPVLLDEFLSMDFELPQRKDLEDSLRQQLLRIEIDQVEDQMRVLRLFKKSNVLTVAASDVLAESPLMKVSDALTDIAEVSVAATLNLAYQAVVKKHGYPKDASGERCSLEHTGFAVIGYGKLGGIELGYGSDLDLVFIHYFDEQAETDGSKSITGFEFAMRVAQKFLSLMTTQTLDGRVYEIDTRLRPSGEAGLLVTSLKAFEQYQLKSAWLWEHQALVRARSIAGEAQLRQKFESLRCQILTQSRDENEVRDEVLKMRQKMKDHLGSSNEQKKHGIFHLKQDAGGIVDIEFMAQYMVLAWSGANPDLAHFSDNVRILEDAAQAGCLSSEDATALMHAYLRERAESHRLALANQSMQVNAAQWRHTREVVCKLWQRLIDPASTMALESE.

Residues 1–422 (MQTKGCRFFM…QFKKLIQEEV (422 aa)) form an adenylyl removase region. The adenylyl transferase stretch occupies residues 424-924 (SPDETDTELE…PASTMALESE (501 aa)).

This sequence belongs to the GlnE family. Mg(2+) serves as cofactor.

The catalysed reaction is [glutamine synthetase]-O(4)-(5'-adenylyl)-L-tyrosine + phosphate = [glutamine synthetase]-L-tyrosine + ADP. It carries out the reaction [glutamine synthetase]-L-tyrosine + ATP = [glutamine synthetase]-O(4)-(5'-adenylyl)-L-tyrosine + diphosphate. Functionally, involved in the regulation of glutamine synthetase GlnA, a key enzyme in the process to assimilate ammonia. When cellular nitrogen levels are high, the C-terminal adenylyl transferase (AT) inactivates GlnA by covalent transfer of an adenylyl group from ATP to specific tyrosine residue of GlnA, thus reducing its activity. Conversely, when nitrogen levels are low, the N-terminal adenylyl removase (AR) activates GlnA by removing the adenylyl group by phosphorolysis, increasing its activity. The regulatory region of GlnE binds the signal transduction protein PII (GlnB) which indicates the nitrogen status of the cell. In Acinetobacter baylyi (strain ATCC 33305 / BD413 / ADP1), this protein is Bifunctional glutamine synthetase adenylyltransferase/adenylyl-removing enzyme.